The sequence spans 165 residues: Nutritionally-regulated adipose and cardiac-enriched protein (165 aa).

A disordered region spans residues 1-47 (MRSAARVSRSNSHPRTRHPTRENEGTTWGSQPSRTERDGDRKCPPSI). Positions 34 to 43 (RTERDGDRKC) are enriched in basic and acidic residues. A helical membrane pass occupies residues 112–132 (GSLFLWLTLCALLGVVLVLYC).

As to expression, predominantly expressed in white adipose tissue (at protein level) and brown adipose tissue. Also detected in heart.

Its subcellular location is the cell membrane. The chain is Nutritionally-regulated adipose and cardiac-enriched protein (Nrac) from Mus musculus (Mouse).